The following is a 132-amino-acid chain: uncharacterized protein (132 aa).

The signal sequence occupies residues 1-25; it reads MRFTKVVGFLSVLGLAAVFPLTAQA.

This is an uncharacterized protein from Bacillus subtilis (strain 168).